Here is a 558-residue protein sequence, read N- to C-terminus: Ribonuclease Y (558 aa).

Residues 3 to 23 traverse the membrane as a helical segment; that stretch reads VLSILLILVAVGVGIFVGRQF. Residues 248–311 enclose the KH domain; it reads TTTTVELPSN…EIAKEALQRL (64 aa). The region spanning 374-467 is the HD domain; sequence VLLHSKEVAY…VCAADALSAA (94 aa).

Belongs to the RNase Y family.

It is found in the cell membrane. Functionally, endoribonuclease that initiates mRNA decay. This chain is Ribonuclease Y, found in Aquifex aeolicus (strain VF5).